The following is a 354-amino-acid chain: Membrane progestin receptor beta (354 aa).

Residues 1 to 76 (MTTAILERLS…FSLFQKHNEV (76 aa)) lie on the Cytoplasmic side of the membrane. A helical membrane pass occupies residues 77–97 (VNVWTHLLAALAVLLRFWAFV). The Extracellular segment spans residues 98–111 (EAGALQWASPHTLP). A helical transmembrane segment spans residues 112-132 (LLLFILSSITYLTCSLLAHLL). The Cytoplasmic portion of the chain corresponds to 133 to 173 (QSKSELSHYTFYFVDYVGVSVYQYGSALAHFFYSSDQAWYE). A helical transmembrane segment spans residues 174–194 (LFWIFFLPAAAFCGWLSCAGC). Over 195–213 (CYAKYRYRRPYPVMRKICQ) the chain is Extracellular. The chain crosses the membrane as a helical span at residues 214–234 (VVPAGLAFVLDISPVAHRVAL). Residues 235–243 (CHLAGCQEQ) are Cytoplasmic-facing. Residues 244–264 (AAWYHTLQILFFLVSAYFFSC) traverse the membrane as a helical segment. Residues 265–283 (PVPEKYFPGSCDIVGHGHQ) lie on the Extracellular side of the membrane. The helical transmembrane segment at 284 to 304 (IFHAFLSVCTLSQLEAILLDY) threads the bilayer. Residues 305 to 315 (QGRHEIFLQRH) lie on the Cytoplasmic side of the membrane. The chain crosses the membrane as a helical span at residues 316-336 (GPLSVYSACLSFFVLAACSAA). Over 337-354 (TATLLRHKVKDRLIKKDS) the chain is Extracellular.

The protein belongs to the ADIPOR family. In terms of tissue distribution, expressed in brain and testis.

It is found in the cell membrane. Plasma membrane progesterone (P4) receptor coupled to G proteins. Seems to act through a G(i) mediated pathway. May be involved in oocyte maturation. Also binds dehydroepiandrosterone (DHEA), pregnanolone, pregnenolone and allopregnanolone. The chain is Membrane progestin receptor beta from Mus musculus (Mouse).